A 565-amino-acid polypeptide reads, in one-letter code: Calcium-dependent protein kinase 21 (565 aa).

The N-myristoyl glycine moiety is linked to residue Gly-2. The segment at 28-55 (PVPDAEAASPRKDGVDGDGDDVRGGGGG) is disordered. Residues 36 to 50 (SPRKDGVDGDGDDVR) are compositionally biased toward basic and acidic residues. Residues 77 to 358 (YVLGKELGRG…AKQVLEHPWL (282 aa)) form the Protein kinase domain. Residues 83–91 (LGRGEFGVT) and Lys-106 each bind ATP. Residue Asp-224 is the Proton acceptor of the active site. The tract at residues 364–394 (APNVSLGDAVRARLQQFSAMNKFKKKALGVV) is autoinhibitory domain. EF-hand domains are found at residues 401-436 (EEVDKYVQMFHHMDKDKNGHLSLDELLEGLHINGQP), 437-472 (VPEPEIRMLLEAADTDGNGTLDCDEFVTVSVHLKKM), 473-500 (SNDEYLAAAFNYFDKDGSGFIELDELRE), and 504-539 (PNEQAILEILRDVDTDKDGRISYQEFELMMKSGADW). Ca(2+) contacts are provided by Asp-414, Asp-416, Asn-418, His-420, Glu-425, Asp-450, Asp-452, Asn-454, Thr-456, Glu-461, Asp-486, Asp-488, Ser-490, Glu-497, Asp-517, Asp-519, Asp-521, Arg-523, and Glu-528.

Belongs to the protein kinase superfamily. Ser/Thr protein kinase family. CDPK subfamily. As to expression, expressed in spikelets and developing seeds.

The protein resides in the membrane. It catalyses the reaction L-seryl-[protein] + ATP = O-phospho-L-seryl-[protein] + ADP + H(+). The catalysed reaction is L-threonyl-[protein] + ATP = O-phospho-L-threonyl-[protein] + ADP + H(+). Its activity is regulated as follows. Activated by calcium. Autophosphorylation may play an important role in the regulation of the kinase activity. Its function is as follows. May play a role in signal transduction pathways that involve calcium as a second messenger. Functions in signal transduction pathways that positively regulate responses to abscisic acid (ABA) and salt stress. This is Calcium-dependent protein kinase 21 from Oryza sativa subsp. japonica (Rice).